We begin with the raw amino-acid sequence, 480 residues long: Methylenetetrahydrofolate--tRNA-(uracil-5-)-methyltransferase TrmFO (480 aa).

Residue 15–20 (GGGLAG) participates in FAD binding.

The protein belongs to the MnmG family. TrmFO subfamily. FAD is required as a cofactor.

It is found in the cytoplasm. It catalyses the reaction uridine(54) in tRNA + (6R)-5,10-methylene-5,6,7,8-tetrahydrofolate + NADH + H(+) = 5-methyluridine(54) in tRNA + (6S)-5,6,7,8-tetrahydrofolate + NAD(+). The catalysed reaction is uridine(54) in tRNA + (6R)-5,10-methylene-5,6,7,8-tetrahydrofolate + NADPH + H(+) = 5-methyluridine(54) in tRNA + (6S)-5,6,7,8-tetrahydrofolate + NADP(+). Catalyzes the folate-dependent formation of 5-methyl-uridine at position 54 (M-5-U54) in all tRNAs. In Sinorhizobium medicae (strain WSM419) (Ensifer medicae), this protein is Methylenetetrahydrofolate--tRNA-(uracil-5-)-methyltransferase TrmFO.